The sequence spans 429 residues: MVLISETSDDGSTGGDHQIKKPKKEEDRNKKLKEKVQVSLPIPEELILRCFLLVRRCHHPSLSLVCRSFHSLMSKLYDDRLRLGYTENVLYAYVGFPPVENPSWYILHRKPYRNLPNTISLKLCKIDSLPPMPWGSTVVTIGSDIYVIGGRVGEKLLEDVGVGYNKPISGGRRGETSIRGGHAGERRISDVTHINCRFHEYRSLPSMKMARCRAAAGVIDGKIYVIGGRKVRTSDWVEVFDLKKQSWSSVPGPYPEAFGRGEFLTYAVMKEKIYCLDLTRNIHIYDPKESKWESWTHGPLSASWNDSSCVVDNLLFCINTSVYFLGWPIKIYDPEKKTWFYLQGLQGFPANGLFVDGYKMANFGGKLVILSADVHRLRRYDCRKREIWCIEIAWERKEDGTFWGKVESVAVVLTPAKTTSVDICGTVTV.

Residues 1–32 (MVLISETSDDGSTGGDHQIKKPKKEEDRNKKL) form a disordered region. The span at 17 to 29 (HQIKKPKKEEDRN) shows a compositional bias: basic and acidic residues. Residues 37–84 (QVSLPIPEELILRCFLLVRRCHHPSLSLVCRSFHSLMSKLYDDRLRLG) enclose the F-box domain. Kelch repeat units lie at residues 144–175 (DIYV…RRGE), 176–221 (TSIR…VIDG), 222–267 (KIYV…LTYA), 269–313 (MKEK…VVDN), and 315–359 (LFCI…DGYK).

This Arabidopsis thaliana (Mouse-ear cress) protein is Putative F-box/kelch-repeat protein At2g21680.